The primary structure comprises 360 residues: G-protein coupled receptor 15 (360 aa).

Over Met1 to Ser33 the chain is Extracellular. The helical transmembrane segment at Val34–Leu54 threads the bilayer. Topologically, residues Met55–Asp69 are cytoplasmic. A helical transmembrane segment spans residues Ile70–Val90. The Extracellular portion of the chain corresponds to Asp91–Ser120. A helical transmembrane segment spans residues Val121 to Ser141. The Cytoplasmic portion of the chain corresponds to Arg142 to Cys149. A helical transmembrane segment spans residues Ala150–Leu170. Residues Ser171–Lys192 lie on the Extracellular side of the membrane. Residues Leu193 to Thr213 form a helical membrane-spanning segment. The Cytoplasmic portion of the chain corresponds to Cys214–Ser239. A helical membrane pass occupies residues Ile240–Ser260. The Extracellular segment spans residues Lys261–Met284. The chain crosses the membrane as a helical span at residues Glu285–Phe305. Residues Asp306–Leu360 lie on the Cytoplasmic side of the membrane. Position 359 is a phosphoserine (Ser359).

The protein belongs to the G-protein coupled receptor 1 family. As to quaternary structure, interacts with adapter YWHAE; this interaction promotes ER-to-Golgi transport of GPR15. Phosphorylation is necessary for YWHAE binding and efficient surface expression. Post-translationally, O-glycosylated. Sialylated O-glycans in the N-terminal tail inhibits binding of GPR15LG. In terms of processing, sulfation is required for efficient binding of GPR15LG.

Its subcellular location is the cell membrane. Functionally, g protein-coupled receptor that plays an important role in immune homeostasis. Acts via its natural ligand GPR15LG, a chemokine-like polypeptide strongly expressed in gastrointestinal tissues. GPR15-GPR15LG signaling axis regulates intestinal homeostasis and inflammation through the migration of immune cells. Controls thereby the specific homing of T-cells, particularly FOXP3+ regulatory T-cells (Tregs), to the large intestine lamina propria. Also required for skin localization of thymus-derived dendritic epidermal T-cells. Plays an important role in mediating cytoprotective function as well as angiogenesis of thrombomodulin. Mechanistically, preferentially signals through the Gi/o pathway to inhibit adenylate cyclase activity and activate a phosphatidylinositol-calcium second messenger system that regulates the release of Ca(2+) ions from intracellular stores. The chain is G-protein coupled receptor 15 (GPR15) from Macaca nemestrina (Pig-tailed macaque).